Reading from the N-terminus, the 351-residue chain is Cell division protein FtsZ (351 aa).

GTP-binding positions include 31–35, 118–120, glutamate 149, arginine 153, and aspartate 197; these read GAGNN and GTG.

Belongs to the FtsZ family. As to quaternary structure, homodimer. Polymerizes to form a dynamic ring structure in a strictly GTP-dependent manner. Interacts directly with several other division proteins. Interacts with FtsA.

Its subcellular location is the cytoplasm. Functionally, essential cell division protein that forms a contractile ring structure (Z ring) at the future cell division site. The regulation of the ring assembly controls the timing and the location of cell division. One of the functions of the FtsZ ring is to recruit other cell division proteins to the septum to produce a new cell wall between the dividing cells. Binds GTP and shows GTPase activity. The polypeptide is Cell division protein FtsZ (Thermotoga maritima (strain ATCC 43589 / DSM 3109 / JCM 10099 / NBRC 100826 / MSB8)).